A 112-amino-acid chain; its full sequence is Secretoglobin family 2B member 24 (112 aa).

The N-terminal stretch at 1 to 23 (MKGTLLLLALLMIGELGFHTTEA) is a signal peptide.

The protein belongs to the secretoglobin family. As to expression, expressed in lacrimal gland, at higher level in males than females.

The protein resides in the secreted. The chain is Secretoglobin family 2B member 24 (Scgb2b24) from Mus musculus (Mouse).